The sequence spans 101 residues: ATP synthase subunit c (101 aa).

The next 2 membrane-spanning stretches (helical) occupy residues 31–51 (AFAY…GAGQ) and 81–101 (AISE…IFVG).

The protein belongs to the ATPase C chain family. F-type ATPases have 2 components, F(1) - the catalytic core - and F(0) - the membrane proton channel. F(1) has five subunits: alpha(3), beta(3), gamma(1), delta(1), epsilon(1). F(0) has three main subunits: a(1), b(2) and c(10-14). The alpha and beta chains form an alternating ring which encloses part of the gamma chain. F(1) is attached to F(0) by a central stalk formed by the gamma and epsilon chains, while a peripheral stalk is formed by the delta and b chains.

The protein resides in the cell membrane. In terms of biological role, f(1)F(0) ATP synthase produces ATP from ADP in the presence of a proton or sodium gradient. F-type ATPases consist of two structural domains, F(1) containing the extramembraneous catalytic core and F(0) containing the membrane proton channel, linked together by a central stalk and a peripheral stalk. During catalysis, ATP synthesis in the catalytic domain of F(1) is coupled via a rotary mechanism of the central stalk subunits to proton translocation. Key component of the F(0) channel; it plays a direct role in translocation across the membrane. A homomeric c-ring of between 10-14 subunits forms the central stalk rotor element with the F(1) delta and epsilon subunits. This chain is ATP synthase subunit c, found in Mesomycoplasma hyopneumoniae (strain J / ATCC 25934 / NCTC 10110) (Mycoplasma hyopneumoniae).